The chain runs to 364 residues: Tyrosyl-DNA phosphodiesterase 2 (364 aa).

Position 1 is an N-acetylmethionine (M1). Residues 1 to 10 (MERNSGPEAG) show a composition bias toward low complexity. The tract at residues 1 to 21 (MERNSGPEAGPEAELEEGEPE) is disordered. K23 is covalently cross-linked (Glycyl lysine isopeptide (Lys-Gly) (interchain with G-Cter in SUMO2)). Positions 68–108 (ESASESRPESLSEPGSCVDLTKEETNDSISSKTSTSEDKSV) are disordered. T88 and T92 each carry phosphothreonine; by ACVR1B. At S95 the chain carries Phosphoserine. Residues 122 to 126 (NIDGL) are interaction with 5' end of substrate DNA. The Mg(2+) site is built by D124 and E154. The interval 228 to 233 (HLESTR) is interaction with 5' end of substrate DNA. D264 acts as the Proton donor/acceptor in catalysis. The interval 266–268 (NLR) is interaction with 5' end of substrate DNA.

This sequence belongs to the CCR4/nocturin family. As to quaternary structure, interacts with TRAF2, TRAF3, TRAF5, TRAF6, TNFRSF8/CD30, TNFRSF5/CD40, TNFRSF1B/TNF-R75, ETS1, ETS2, FLI1, SMAD3 and ACVR1B/ALK4. Mg(2+) serves as cofactor. Requires Mn(2+) as cofactor. Ubiquitinated by TRAF6.

It localises to the nucleus. Its subcellular location is the PML body. The protein resides in the nucleolus. The protein localises to the cytoplasm. DNA repair enzyme that can remove a variety of covalent adducts from DNA through hydrolysis of a 5'-phosphodiester bond, giving rise to DNA with a free 5' phosphate. Catalyzes the hydrolysis of dead-end complexes between DNA and the topoisomerase 2 (TOP2) active site tyrosine residue. The 5'-tyrosyl DNA phosphodiesterase activity can enable the repair of TOP2-induced DNA double-strand breaks/DSBs without the need for nuclease activity, creating a 'clean' DSB with 5'-phosphate termini that are ready for ligation. Thereby, protects the transcription of many genes involved in neurological development and maintenance from the abortive activity of TOP2. Hydrolyzes 5'-phosphoglycolates on protruding 5' ends on DSBs due to DNA damage by radiation and free radicals. Has preference for single-stranded DNA or duplex DNA with a 4 base pair overhang as substrate. Also has 3'-tyrosyl DNA phosphodiesterase activity, but less efficiently and much slower than TDP1. Constitutes the major if not only 5'-tyrosyl-DNA phosphodiesterase in cells. Also acts as an adapter by participating in the specific activation of MAP3K7/TAK1 in response to TGF-beta: associates with components of the TGF-beta receptor-TRAF6-TAK1 signaling module and promotes their ubiquitination dependent complex formation. Involved in non-canonical TGF-beta induced signaling routes. May also act as a negative regulator of ETS1 and may inhibit NF-kappa-B activation. Acts as a regulator of ribosome biogenesis following stress. This chain is Tyrosyl-DNA phosphodiesterase 2 (TDP2), found in Bos taurus (Bovine).